We begin with the raw amino-acid sequence, 698 residues long: Long-chain-fatty-acid--CoA ligase 1 (698 aa).

At Met-1 the chain carries N-acetylmethionine. The residue at position 9 (Tyr-9) is a 3'-nitrotyrosine. Tyr-84 carries the phosphotyrosine modification. The O-linked (GlcNAc) serine glycan is linked to Ser-135. Residues Lys-356 and Lys-386 each carry the N6-acetyllysine modification. Position 620 is a phosphoserine (Ser-620). Lys-632 carries the N6-acetyllysine modification.

This sequence belongs to the ATP-dependent AMP-binding enzyme family. Mg(2+) is required as a cofactor.

It localises to the microsome membrane. The protein resides in the mitochondrion outer membrane. The protein localises to the peroxisome membrane. Its subcellular location is the endoplasmic reticulum membrane. It carries out the reaction a long-chain fatty acid + ATP + CoA = a long-chain fatty acyl-CoA + AMP + diphosphate. The catalysed reaction is (5Z,8Z,11Z,14Z)-eicosatetraenoate + ATP + CoA = (5Z,8Z,11Z,14Z)-eicosatetraenoyl-CoA + AMP + diphosphate. The enzyme catalyses 3,7,11,15-tetramethylhexadecanoate + ATP + CoA = phytanoyl-CoA + AMP + diphosphate. It catalyses the reaction hexadecanoate + ATP + CoA = hexadecanoyl-CoA + AMP + diphosphate. It carries out the reaction (E)-hexadec-2-enoate + ATP + CoA = (2E)-hexadecenoyl-CoA + AMP + diphosphate. The catalysed reaction is 2,6,10,14-tetramethylpentadecanoate + ATP + CoA = pristanoyl-CoA + AMP + diphosphate. The enzyme catalyses 14,15-epoxy-(5Z,8Z,11Z)-eicosatrienoate + ATP + CoA = 14,15-epoxy-(5Z,8Z,11Z)-eicosatrienoyl-CoA + AMP + diphosphate. It catalyses the reaction 5-hydroxy-(6E,8Z,11Z,14Z)-eicosatetraenoate + ATP + CoA = 5-hydroxy-(6E,8Z,11Z,14Z)-eicosatetraenoyl-CoA + AMP + diphosphate. It carries out the reaction 12-hydroxy-(5Z,8Z,10E,14Z)-eicosatetraenoate + ATP + CoA = 12-hydroxy-(5Z,8Z,10E,14Z)-eicosatetraenoyl-CoA + AMP + diphosphate. The catalysed reaction is 15-hydroxy-(5Z,8Z,11Z,13E)-eicosatetraenoate + ATP + CoA = 15-hydroxy-(5Z,8Z,11Z,13E)-eicosatetraenoyl-CoA + AMP + diphosphate. The enzyme catalyses (9Z)-octadecenoate + ATP + CoA = (9Z)-octadecenoyl-CoA + AMP + diphosphate. Inhibited at high temperature and by arachidonate. In terms of biological role, catalyzes the conversion of long-chain fatty acids to their active form acyl-CoAs for both synthesis of cellular lipids, and degradation via beta-oxidation. Preferentially uses palmitoleate, oleate and linoleate. Preferentially activates arachidonate than epoxyeicosatrienoic acids (EETs) or hydroxyeicosatrienoic acids (HETEs). The protein is Long-chain-fatty-acid--CoA ligase 1 of Cavia porcellus (Guinea pig).